Consider the following 223-residue polypeptide: Type III pantothenate kinase (223 aa).

17–24 (DIGNTHIH) contacts ATP. Residues Tyr-81 and 85–88 (GIDR) contribute to the substrate site. Residue Asp-87 is the Proton acceptor of the active site. Asp-102 is a binding site for K(+). Ser-105 provides a ligand contact to ATP. Thr-157 contributes to the substrate binding site.

Belongs to the type III pantothenate kinase family. Homodimer. The cofactor is NH4(+). Requires K(+) as cofactor.

The protein resides in the cytoplasm. The catalysed reaction is (R)-pantothenate + ATP = (R)-4'-phosphopantothenate + ADP + H(+). It participates in cofactor biosynthesis; coenzyme A biosynthesis; CoA from (R)-pantothenate: step 1/5. In terms of biological role, catalyzes the phosphorylation of pantothenate (Pan), the first step in CoA biosynthesis. The polypeptide is Type III pantothenate kinase (Helicobacter pylori (strain HPAG1)).